We begin with the raw amino-acid sequence, 404 residues long: CCA-adding enzyme (404 aa).

Residues G27 and R30 each coordinate ATP. Positions 27 and 30 each coordinate CTP. 2 residues coordinate Mg(2+): D40 and D42. ATP-binding residues include R111, D154, R157, R160, and R163. CTP-binding residues include R111, D154, R157, R160, and R163.

This sequence belongs to the tRNA nucleotidyltransferase/poly(A) polymerase family. Bacterial CCA-adding enzyme type 3 subfamily. In terms of assembly, homodimer. Mg(2+) serves as cofactor.

It catalyses the reaction a tRNA precursor + 2 CTP + ATP = a tRNA with a 3' CCA end + 3 diphosphate. It carries out the reaction a tRNA with a 3' CCA end + 2 CTP + ATP = a tRNA with a 3' CCACCA end + 3 diphosphate. In terms of biological role, catalyzes the addition and repair of the essential 3'-terminal CCA sequence in tRNAs without using a nucleic acid template. Adds these three nucleotides in the order of C, C, and A to the tRNA nucleotide-73, using CTP and ATP as substrates and producing inorganic pyrophosphate. tRNA 3'-terminal CCA addition is required both for tRNA processing and repair. Also involved in tRNA surveillance by mediating tandem CCA addition to generate a CCACCA at the 3' terminus of unstable tRNAs. While stable tRNAs receive only 3'-terminal CCA, unstable tRNAs are marked with CCACCA and rapidly degraded. This is CCA-adding enzyme from Geobacillus kaustophilus (strain HTA426).